A 358-amino-acid polypeptide reads, in one-letter code: MTDTTSEQTERKLLDELYADFEDAGLIPLWTQVDGLMPMSPQPAAVPHLWRWAELLPIAQRSGELVPVGRGGERRAMALSNPGFPGLPYATPTLWTAIQYLGPREVAPSHRHSQGAFRFVVEGEGVWTNVDGDAVAMRRGDLLLTPSWAFHEHQNVTDEPMAWLDGLDIPLVSKLDAGFFEFGPDELSTRETPERSRGERLWGHPGLRPIGRPDQPNSPLNAYRWEHTDAALTAQLELEQEGVPGVLEPGHAGVRFSNPTTGRDALVTMRTEMRRLRAGTRTAPVRTVGSAIWQVFEGEAVARVGDKVFEIAKGDLFVVPSWCEVSLSARTQVDLFRFSDEPVYEALGLARTSRGEHK.

The Cupin type-2 domain maps to 99–165 (QYLGPREVAP…VTDEPMAWLD (67 aa)). Residues 185–215 (DELSTRETPERSRGERLWGHPGLRPIGRPDQ) form a disordered region. Over residues 187 to 202 (LSTRETPERSRGERLW) the composition is skewed to basic and acidic residues.

This sequence belongs to the gentisate 1,2-dioxygenase family.

It catalyses the reaction 2,5-dihydroxybenzoate + O2 = 3-maleylpyruvate + H(+). Its function is as follows. Involved in the degradation of salicylate via a pathway involving coenzyme A derivative. Catalyzes the oxygen-dependent ring fission of gentisate between the carboxyl and proximal hydroxyl groups at positions 1 and 2 of the aromatic ring to form maleylpyruvate. The substrate specificity is strong, since salicylate, catechol, protocatechuic acid, homogenetisate, 2,3-dihydroxybenzoate or 5-aminosalicylate cannot substitute for gentisate in the ring cleavage reaction. The polypeptide is Gentisate 1,2-dioxygenase (Streptomyces sp).